A 1158-amino-acid polypeptide reads, in one-letter code: Serine/threonine/tyrosine-interacting-like protein 2 (1158 aa).

Disordered regions lie at residues M1–N21, E280–S303, E315–K337, L360–I392, G407–S444, S492–A527, K559–S582, Q597–K622, K873–L915, and S940–E1135. Residues E8–E19 show a composition bias toward acidic residues. In terms of domain architecture, Tyrosine-protein phosphatase spans N132–E280. Residues S322 to K337 are compositionally biased toward polar residues. S377 carries the post-translational modification Phosphoserine. T433 carries the phosphothreonine modification. A compositionally biased stretch (low complexity) spans S435–S444. The segment covering K500 to E517 has biased composition (basic and acidic residues). Position 509 is a phosphoserine (S509). Residues V600 to L619 show a composition bias toward basic and acidic residues. Acidic residues predominate over residues D877 to D890. Polar residues-rich tracts occupy residues R897–S914 and S952–S966. A compositionally biased stretch (low complexity) spans K974–S983. Phosphoserine is present on S985. The span at T990 to N999 shows a compositional bias: polar residues. Residues S1000 to T1012 show a composition bias toward low complexity. S1036 bears the Phosphoserine mark. Basic and acidic residues-rich tracts occupy residues R1044–E1056, R1064–F1079, and R1094–R1111. Over residues R1126 to E1135 the composition is skewed to acidic residues.

Belongs to the protein-tyrosine phosphatase family. Non-receptor class dual specificity subfamily.

It localises to the cytoplasm. Its subcellular location is the myofibril. The protein resides in the sarcomere. Its function is as follows. May be required for myofiber maturation. This Homo sapiens (Human) protein is Serine/threonine/tyrosine-interacting-like protein 2.